A 547-amino-acid chain; its full sequence is Large cysteine-rich periplasmic protein OmcB, serovar E (547 aa).

An N-terminal signal peptide occupies residues 1–22 (MNKLIRRAVTIFAVTSVASLFA). Residues 23–40 (SGVLETSMAESLSTNVIS) constitute a propeptide that is removed on maturation. A disordered region spans residues 46 to 83 (AKDNTSHKSKKARKNHSKETLVDRKEVAPVHESKATGP). Basic residues predominate over residues 52–61 (HKSKKARKNH). Positions 62–79 (SKETLVDRKEVAPVHESK) are enriched in basic and acidic residues.

Part of a disulfide cross-linked outer membrane complex (COMC) composed of the major outer membrane porin (MOMP), the small cysteine-rich protein (OmcA) and the large cysteine-rich periplasmic protein (OmcB).

Its subcellular location is the periplasm. In terms of biological role, in elementary bodies (EBs, the infectious stage, which is able to survive outside the host cell) provides the structural integrity of the outer envelope through disulfide cross-links with the small cysteine-rich protein and the major outer membrane protein. It has been described in publications as the Sarkosyl-insoluble COMC (Chlamydia outer membrane complex), and serves as the functional equivalent of peptidoglycan. This chain is Large cysteine-rich periplasmic protein OmcB, serovar E (omcB), found in Chlamydia trachomatis.